We begin with the raw amino-acid sequence, 198 residues long: MGSLISEILTWLTNMGYAGIAIGLMIEIIPSEIVLAYGGYMVSEGTIGFIGAIIAGVIGGTIAQIFIYWIGRYGGRPFLDKYGKYLLIKKHHIDMSENWFQKYGAGVVFSARFIPVVRHAISIPAGIARMPFLKFVVLTVLAIIPWSILFVYLGIQLGSQWDDVENIAGTYTTPIMILAVVVIALYFVIKKRTAIFKR.

5 consecutive transmembrane segments (helical) span residues 15–35 (MGYA…EIVL), 47–67 (IGFI…QIFI), 107–127 (VVFS…PAGI), 135–155 (FVVL…YLGI), and 169–189 (GTYT…YFVI).

Belongs to the DedA family.

It localises to the cell membrane. Flippase that catalyzes the transport of undecaprenyl phosphate (UndP) across the cytoplasmic membrane, from the external side to the cytoplasmic side. Is involved in UndP recycling during peptidoglycan synthesis. The protein is Undecaprenyl phosphate transporter A of Bacillus subtilis (strain 168).